The sequence spans 459 residues: ATP synthase subunit beta (459 aa).

148–155 is a binding site for ATP; the sequence is GGAGVGKT.

The protein belongs to the ATPase alpha/beta chains family. F-type ATPases have 2 components, CF(1) - the catalytic core - and CF(0) - the membrane proton channel. CF(1) has five subunits: alpha(3), beta(3), gamma(1), delta(1), epsilon(1). CF(0) has three main subunits: a(1), b(2) and c(9-12). The alpha and beta chains form an alternating ring which encloses part of the gamma chain. CF(1) is attached to CF(0) by a central stalk formed by the gamma and epsilon chains, while a peripheral stalk is formed by the delta and b chains.

It is found in the cell inner membrane. The catalysed reaction is ATP + H2O + 4 H(+)(in) = ADP + phosphate + 5 H(+)(out). Its function is as follows. Produces ATP from ADP in the presence of a proton gradient across the membrane. The catalytic sites are hosted primarily by the beta subunits. The sequence is that of ATP synthase subunit beta from Cellvibrio japonicus (strain Ueda107) (Pseudomonas fluorescens subsp. cellulosa).